The following is a 945-amino-acid chain: MEQMSVTQFAGELKMPASVLLEQLQKAGVEKTGADQLLTEQDKARLLEYLRRSHGQSQPKGKITLTRKQTSEIRATDSSGRARTVQVEVRKKRVFMKRDEVSAETGSLESAQIEEETAGLPMGEIEPTPEPENIVEPVAEAIPEPEPVREPEPEPEPIVEPEPEPEPEPEPEPQPEPEPRPEPEPATVESGAPAKPEAPVRAPSRPPLRVSILSDEERAAREREARRHQELRARQAADLKAKQDREAAARAAAEARRAEEEARVRAEAERRAEAAKPQPKEAAKAPAGTLHRPAKTEEKPAGKDAKRTARGDTAGESAKRRGLKTRGEVGATTGSWRGARGGGRRGAQDEHKSFQAPTEPVVREIHVPETISVADLAHKMSVKAAEVIKILMKMGSMVTINQVLDQETAMILVEEMGHKAFAAKLDDPDTYLESAEAHHDAAVEPRAPVVTVMGHVDHGKTSLLDYIRRAKVASGEAGGITQHIGAYHVETPRGMLTFLDTPGHEAFTAMRARGAKATDIVILVVAADDGVMPQTREAIHHAKAANVPLVVAVNKIDKPDANPDRVKQELVAEGVLPEEYGGDVMFINVSAKTGVGIDSLLEAVLLQAEVLELTAPVDSPAKGLIIEARLDKGRGPVASLLVLSGTLRKGDVMLVGATFGRIRAMLDENGKAIDHAGPSIPVEVLGLSDVPAAGDEAIALADEKKAREIALFRQGKYREVKLAKQQAAKLESMFEQMAEGEVKTLPLIIKADVQGSQEALVQALNKLSTDEVRVNAIHSAVGAISESDVNLAQASGAVIIGFNTRADAGARKLAETFGVDIRYYNIIYDAVDEVKAALSGMLAPERRENVIGLVEVRQVFKVPKVGTVAGCYVLEGVVKRGSQVRVLRNHVVIHNGELESLKRFKDDVKEVKFGFECGLSIRNFNDVQEGDQLEVFEIQEIARTL.

Disordered stretches follow at residues 52–80 and 96–357; these read RSHGQSQPKGKITLTRKQTSEIRATDSSG and MKRD…FQAP. Residues 153 to 175 are compositionally biased toward acidic residues; the sequence is PEPEPIVEPEPEPEPEPEPEPQP. Composition is skewed to basic and acidic residues over residues 215–283 and 294–310; these read DEER…KEAA and AKTEEKPAGKDAKRTAR. Residues 445–614 enclose the tr-type G domain; it reads PRAPVVTVMG…LLQAEVLELT (170 aa). A G1 region spans residues 454 to 461; sequence GHVDHGKT. GTP is bound at residue 454–461; sequence GHVDHGKT. Residues 479–483 form a G2 region; sequence GITQH. The interval 500–503 is G3; that stretch reads DTPG. GTP contacts are provided by residues 500 to 504 and 554 to 557; these read DTPGH and NKID. The segment at 554–557 is G4; sequence NKID. Residues 590–592 are G5; the sequence is SAK.

Belongs to the TRAFAC class translation factor GTPase superfamily. Classic translation factor GTPase family. IF-2 subfamily.

It is found in the cytoplasm. Its function is as follows. One of the essential components for the initiation of protein synthesis. Protects formylmethionyl-tRNA from spontaneous hydrolysis and promotes its binding to the 30S ribosomal subunits. Also involved in the hydrolysis of GTP during the formation of the 70S ribosomal complex. In Aromatoleum aromaticum (strain DSM 19018 / LMG 30748 / EbN1) (Azoarcus sp. (strain EbN1)), this protein is Translation initiation factor IF-2.